The chain runs to 436 residues: 3-ketoacyl-CoA thiolase (436 aa).

Cys99 serves as the catalytic Acyl-thioester intermediate. Active-site proton acceptor residues include His392 and Cys422.

This sequence belongs to the thiolase-like superfamily. Thiolase family. As to quaternary structure, heterotetramer of two alpha chains (FadJ) and two beta chains (FadI).

It localises to the cytoplasm. It carries out the reaction an acyl-CoA + acetyl-CoA = a 3-oxoacyl-CoA + CoA. It functions in the pathway lipid metabolism; fatty acid beta-oxidation. Functionally, catalyzes the final step of fatty acid oxidation in which acetyl-CoA is released and the CoA ester of a fatty acid two carbons shorter is formed. The polypeptide is 3-ketoacyl-CoA thiolase (Alteromonas mediterranea (strain DSM 17117 / CIP 110805 / LMG 28347 / Deep ecotype)).